A 159-amino-acid chain; its full sequence is Ribosomal RNA large subunit methyltransferase H (159 aa).

S-adenosyl-L-methionine contacts are provided by residues L76, G108, and 127 to 132 (FSKMTF).

This sequence belongs to the RNA methyltransferase RlmH family. In terms of assembly, homodimer.

The protein localises to the cytoplasm. It catalyses the reaction pseudouridine(1915) in 23S rRNA + S-adenosyl-L-methionine = N(3)-methylpseudouridine(1915) in 23S rRNA + S-adenosyl-L-homocysteine + H(+). Its function is as follows. Specifically methylates the pseudouridine at position 1915 (m3Psi1915) in 23S rRNA. This chain is Ribosomal RNA large subunit methyltransferase H, found in Clostridium botulinum (strain Eklund 17B / Type B).